The following is a 267-amino-acid chain: N-formylglutamate deformylase (267 aa).

It belongs to the N-formylglutamate deformylase family. Monomer.

It carries out the reaction N-formyl-L-glutamate + H2O = formate + L-glutamate. It functions in the pathway amino-acid degradation; L-histidine degradation into L-glutamate; L-glutamate from N-formimidoyl-L-glutamate (deiminase route): step 2/2. Its activity is regulated as follows. Stimulated by Co(2+). Fe(2+) is also a good activator, particularly at lower concentrations, but it inhibits slightly the activity when used at concentrations over 0.1 mM. Other divalent metals tested (Cd(2+), Ca(2+), Mn(2+), Zn(2+), Ni(2+) and Mg(2+)) are not effective activators. Functionally, catalyzes the hydrolysis of N-formyl-L-glutamate to formate and L-glutamate. The protein is N-formylglutamate deformylase of Pseudomonas putida (Arthrobacter siderocapsulatus).